Reading from the N-terminus, the 414-residue chain is Mannan endo-1,4-beta-mannosidase 3 (414 aa).

A signal peptide spans 1-19 (MKCLCFVVLLAILIAQNSS). Asn-17 and Asn-75 each carry an N-linked (GlcNAc...) asparagine glycan. Trp-87 is a substrate binding site. N-linked (GlcNAc...) asparagine glycosylation is found at Asn-133 and Asn-153. Asn-202 contacts substrate. The Proton donor role is filled by Glu-203. Tyr-283 lines the substrate pocket. Glu-323 functions as the Nucleophile in the catalytic mechanism. The N-linked (GlcNAc...) asparagine glycan is linked to Asn-343. Trp-365 serves as a coordination point for substrate. Asn-386 carries N-linked (GlcNAc...) asparagine glycosylation.

This sequence belongs to the glycosyl hydrolase 5 (cellulase A) family. Expressed in leaves, flowers, siliques and seeds.

The protein localises to the secreted. The catalysed reaction is Random hydrolysis of (1-&gt;4)-beta-D-mannosidic linkages in mannans, galactomannans and glucomannans.. This is Mannan endo-1,4-beta-mannosidase 3 (MAN3) from Arabidopsis thaliana (Mouse-ear cress).